A 140-amino-acid chain; its full sequence is Nucleoside diphosphate kinase (140 aa).

ATP is bound by residues K11, F59, R87, T93, R104, and N114. Catalysis depends on H117, which acts as the Pros-phosphohistidine intermediate.

It belongs to the NDK family. Homotetramer. Mg(2+) is required as a cofactor.

The protein resides in the cytoplasm. It carries out the reaction a 2'-deoxyribonucleoside 5'-diphosphate + ATP = a 2'-deoxyribonucleoside 5'-triphosphate + ADP. The catalysed reaction is a ribonucleoside 5'-diphosphate + ATP = a ribonucleoside 5'-triphosphate + ADP. Functionally, major role in the synthesis of nucleoside triphosphates other than ATP. The ATP gamma phosphate is transferred to the NDP beta phosphate via a ping-pong mechanism, using a phosphorylated active-site intermediate. The sequence is that of Nucleoside diphosphate kinase from Methylorubrum populi (strain ATCC BAA-705 / NCIMB 13946 / BJ001) (Methylobacterium populi).